The following is a 232-amino-acid chain: Phosphatidylserine decarboxylase proenzyme (232 aa).

Serine 190 functions as the Schiff-base intermediate with substrate; via pyruvic acid in the catalytic mechanism. Serine 190 bears the Pyruvic acid (Ser); by autocatalysis mark.

The protein belongs to the phosphatidylserine decarboxylase family. PSD-A subfamily. As to quaternary structure, heterodimer of a large membrane-associated beta subunit and a small pyruvoyl-containing alpha subunit. Pyruvate is required as a cofactor. In terms of processing, is synthesized initially as an inactive proenzyme. Formation of the active enzyme involves a self-maturation process in which the active site pyruvoyl group is generated from an internal serine residue via an autocatalytic post-translational modification. Two non-identical subunits are generated from the proenzyme in this reaction, and the pyruvate is formed at the N-terminus of the alpha chain, which is derived from the carboxyl end of the proenzyme. The post-translation cleavage follows an unusual pathway, termed non-hydrolytic serinolysis, in which the side chain hydroxyl group of the serine supplies its oxygen atom to form the C-terminus of the beta chain, while the remainder of the serine residue undergoes an oxidative deamination to produce ammonia and the pyruvoyl prosthetic group on the alpha chain.

The protein localises to the cell membrane. It carries out the reaction a 1,2-diacyl-sn-glycero-3-phospho-L-serine + H(+) = a 1,2-diacyl-sn-glycero-3-phosphoethanolamine + CO2. Its pathway is phospholipid metabolism; phosphatidylethanolamine biosynthesis; phosphatidylethanolamine from CDP-diacylglycerol: step 2/2. Its function is as follows. Catalyzes the formation of phosphatidylethanolamine (PtdEtn) from phosphatidylserine (PtdSer). This is Phosphatidylserine decarboxylase proenzyme from Mesorhizobium japonicum (strain LMG 29417 / CECT 9101 / MAFF 303099) (Mesorhizobium loti (strain MAFF 303099)).